The primary structure comprises 186 residues: uncharacterized protein (186 aa).

Residues 121–146 form a disordered region; that stretch reads TSPLLKKNKPSSDQDDTSKQSFDQDE.

It belongs to the chlamydial CPn_0422/CT_273/TC_0545 family.

This is an uncharacterized protein from Chlamydia muridarum (strain MoPn / Nigg).